A 418-amino-acid polypeptide reads, in one-letter code: UPF0261 protein BMEII0128 (418 aa).

This sequence belongs to the UPF0261 family.

This is UPF0261 protein BMEII0128 from Brucella melitensis biotype 1 (strain ATCC 23456 / CCUG 17765 / NCTC 10094 / 16M).